The following is a 119-amino-acid chain: Large ribosomal subunit protein uL18 (119 aa).

It belongs to the universal ribosomal protein uL18 family. In terms of assembly, part of the 50S ribosomal subunit; part of the 5S rRNA/L5/L18/L25 subcomplex. Contacts the 5S and 23S rRNAs.

In terms of biological role, this is one of the proteins that bind and probably mediate the attachment of the 5S RNA into the large ribosomal subunit, where it forms part of the central protuberance. This chain is Large ribosomal subunit protein uL18, found in Clostridium botulinum (strain Langeland / NCTC 10281 / Type F).